The primary structure comprises 958 residues: Glycine dehydrogenase (decarboxylating) (958 aa).

An N6-(pyridoxal phosphate)lysine modification is found at Lys-705.

The protein belongs to the GcvP family. In terms of assembly, the glycine cleavage system is composed of four proteins: P, T, L and H. The cofactor is pyridoxal 5'-phosphate.

It catalyses the reaction N(6)-[(R)-lipoyl]-L-lysyl-[glycine-cleavage complex H protein] + glycine + H(+) = N(6)-[(R)-S(8)-aminomethyldihydrolipoyl]-L-lysyl-[glycine-cleavage complex H protein] + CO2. The glycine cleavage system catalyzes the degradation of glycine. The P protein binds the alpha-amino group of glycine through its pyridoxal phosphate cofactor; CO(2) is released and the remaining methylamine moiety is then transferred to the lipoamide cofactor of the H protein. This Bdellovibrio bacteriovorus (strain ATCC 15356 / DSM 50701 / NCIMB 9529 / HD100) protein is Glycine dehydrogenase (decarboxylating).